The following is a 295-amino-acid chain: Tyrosine recombinase XerC (295 aa).

In terms of domain architecture, Core-binding (CB) spans 1-85 (MLTALNRYWD…ALRRFLSFLV (85 aa)). Residues 106–285 (HLPKNMDGEQ…NFQHLAEVYD (180 aa)) enclose the Tyr recombinase domain. Catalysis depends on residues R145, K169, H237, R240, and H263. Residue Y272 is the O-(3'-phospho-DNA)-tyrosine intermediate of the active site.

It belongs to the 'phage' integrase family. XerC subfamily. Forms a cyclic heterotetrameric complex composed of two molecules of XerC and two molecules of XerD.

The protein localises to the cytoplasm. Site-specific tyrosine recombinase, which acts by catalyzing the cutting and rejoining of the recombining DNA molecules. The XerC-XerD complex is essential to convert dimers of the bacterial chromosome into monomers to permit their segregation at cell division. It also contributes to the segregational stability of plasmids. This is Tyrosine recombinase XerC from Haemophilus influenzae (strain PittEE).